Consider the following 236-residue polypeptide: Ubiquinone biosynthesis O-methyltransferase (236 aa).

S-adenosyl-L-methionine is bound by residues R39, G59, D80, and M124.

Belongs to the methyltransferase superfamily. UbiG/COQ3 family.

The enzyme catalyses a 3-demethylubiquinol + S-adenosyl-L-methionine = a ubiquinol + S-adenosyl-L-homocysteine + H(+). It catalyses the reaction a 3-(all-trans-polyprenyl)benzene-1,2-diol + S-adenosyl-L-methionine = a 2-methoxy-6-(all-trans-polyprenyl)phenol + S-adenosyl-L-homocysteine + H(+). The protein operates within cofactor biosynthesis; ubiquinone biosynthesis. O-methyltransferase that catalyzes the 2 O-methylation steps in the ubiquinone biosynthetic pathway. The sequence is that of Ubiquinone biosynthesis O-methyltransferase from Shewanella halifaxensis (strain HAW-EB4).